A 188-amino-acid chain; its full sequence is dCTP deaminase (188 aa).

Residues 111-116 (KSTYAR), 135-137 (TLE), glutamine 156, tyrosine 170, lysine 179, and glutamine 180 each bind dCTP. Residue glutamate 137 is the Proton donor/acceptor of the active site.

It belongs to the dCTP deaminase family. In terms of assembly, homotrimer.

The catalysed reaction is dCTP + H2O + H(+) = dUTP + NH4(+). It functions in the pathway pyrimidine metabolism; dUMP biosynthesis; dUMP from dCTP (dUTP route): step 1/2. Catalyzes the deamination of dCTP to dUTP. The sequence is that of dCTP deaminase from Rickettsia typhi (strain ATCC VR-144 / Wilmington).